A 703-amino-acid polypeptide reads, in one-letter code: Fibulin-1 (703 aa).

Positions 1–29 (MERAAPSRRVPLPLLLLGGLALLAAGVDA) are cleaved as a signal peptide. Intrachain disulfides connect Cys-36–Cys-61, Cys-37–Cys-68, Cys-50–Cys-69, Cys-78–Cys-109, Cys-91–Cys-110, Cys-112–Cys-136, Cys-113–Cys-143, Cys-126–Cys-144, Cys-180–Cys-190, Cys-186–Cys-199, Cys-201–Cys-214, Cys-220–Cys-233, Cys-227–Cys-242, Cys-248–Cys-260, Cys-266–Cys-279, Cys-273–Cys-288, Cys-294–Cys-306, Cys-312–Cys-325, Cys-319–Cys-334, Cys-341–Cys-354, Cys-360–Cys-373, Cys-367–Cys-382, Cys-384–Cys-397, Cys-403–Cys-415, Cys-411–Cys-424, Cys-426–Cys-439, Cys-445–Cys-454, Cys-450–Cys-463, Cys-465–Cys-479, Cys-485–Cys-498, Cys-494–Cys-507, Cys-509–Cys-523, Cys-529–Cys-542, Cys-536–Cys-551, and Cys-556–Cys-577. Anaphylatoxin-like domains follow at residues 36–76 (CCAD…LEEL), 77–111 (HCAT…RCCH), and 112–144 (CCLL…QACC). Asn-98 carries N-linked (GlcNAc...) (complex) asparagine glycosylation. The EGF-like 1 domain occupies 176 to 215 (LNDRCRGGGPCKQQCRDTGDEVVCSCFVGYQLLSDGVSCE). One can recognise an EGF-like 2; calcium-binding domain in the interval 216 to 261 (DVNECITGSHSCRLGESCINTVGSFRCQRDSSCGTGYELTEDNSCK). The EGF-like 3; calcium-binding domain maps to 262–307 (DIDECESGIHNCLPDFICQNTLGSFRCRPKLQCKSGFIQDALGNCI). The EGF-like 4; calcium-binding domain maps to 308 to 355 (DINECLSISAPCPIGHTCINTEGSYTCQKNVPNCGRGYHLNEEGTRCV). Residues 356-398 (DVDECAPPAEPCGKGHRCVNSPGSFRCECKTGYYFDGISRMCV) form the EGF-like 5; calcium-binding domain. Residues 356 to 440 (DVDECAPPAE…RLSVDGRSCE (85 aa)) form a self-association and FN1-binding; calcium is necessary for homotypic binding, but not for heterotypic binding region. Positions 399–440 (DVNECQRYPGRLCGHKCENTLGSYLCSCSVGFRLSVDGRSCE) constitute an EGF-like 6; calcium-binding domain. One can recognise an EGF-like 7; calcium-binding domain in the interval 441–480 (DINECSSSPCSQECANVYGSYQCYCRRGYQLSDVDGVTCE). One can recognise an EGF-like 8; calcium-binding domain in the interval 481–524 (DIDECALPTGGHICSYRCINIPGSFQCSCPSSGYRLAPNGRNCQ). Positions 525 to 578 (DIDECVTGIHNCSINETCFNIQGGFRCLAFECPENYRRSAATLQQEKTDTVRCI) constitute an EGF-like 9; calcium-binding domain. Asn-535 and Asn-539 each carry an N-linked (GlcNAc...) asparagine glycan.

It belongs to the fibulin family. In terms of assembly, homomultimerizes and interacts with various extracellular matrix components such as FN1, LAMA1, LAMA2, NID, ACAN, CSPG2 and type IV collagen. Also interacts with APP and FGB. Interacts with FBLN7. Interacts with CCN3. (Microbial infection) Interacts with human papillomavirus/HPV type 16, 18 and 31 proteins E6. Isoform A and isoform B are only expressed in placenta. Isoform C and isoform D are expressed in a variety of tissues and cultured cells.

The protein localises to the secreted. It is found in the extracellular space. Its subcellular location is the extracellular matrix. Incorporated into fibronectin-containing matrix fibers. May play a role in cell adhesion and migration along protein fibers within the extracellular matrix (ECM). Could be important for certain developmental processes and contribute to the supramolecular organization of ECM architecture, in particular to those of basement membranes. Has been implicated in a role in cellular transformation and tumor invasion, it appears to be a tumor suppressor. May play a role in haemostasis and thrombosis owing to its ability to bind fibrinogen and incorporate into clots. Could play a significant role in modulating the neurotrophic activities of APP, particularly soluble APP. The polypeptide is Fibulin-1 (FBLN1) (Homo sapiens (Human)).